Reading from the N-terminus, the 488-residue chain is N-acyl-D-glutamate deacylase (488 aa).

The protein belongs to the metallo-dependent hydrolases superfamily. N-acyl-D-amino-acid deacylase family. Zn(2+) is required as a cofactor.

The protein resides in the cytoplasm. It carries out the reaction an N-acyl-D-glutamate + H2O = D-glutamate + a carboxylate. Its activity is regulated as follows. Inhibited by cobalt, copper and EDTA. The polypeptide is N-acyl-D-glutamate deacylase (Alcaligenes xylosoxydans xylosoxydans (Achromobacter xylosoxidans)).